The chain runs to 203 residues: Glycerol-3-phosphate acyltransferase (203 aa).

4 helical membrane-spanning segments follow: residues Leu-6–Val-26, Ala-82–Phe-102, Ala-118–Ile-138, and Tyr-141–Asp-161.

Belongs to the PlsY family. Probably interacts with PlsX.

Its subcellular location is the cell inner membrane. The catalysed reaction is an acyl phosphate + sn-glycerol 3-phosphate = a 1-acyl-sn-glycero-3-phosphate + phosphate. Its pathway is lipid metabolism; phospholipid metabolism. In terms of biological role, catalyzes the transfer of an acyl group from acyl-phosphate (acyl-PO(4)) to glycerol-3-phosphate (G3P) to form lysophosphatidic acid (LPA). This enzyme utilizes acyl-phosphate as fatty acyl donor, but not acyl-CoA or acyl-ACP. The chain is Glycerol-3-phosphate acyltransferase from Shewanella sp. (strain MR-7).